We begin with the raw amino-acid sequence, 883 residues long: MNEQYSALRSNVSMLGKVLGETIKDALGEHILERVETIRKLSKSSRAGNDANRQELLTTLQNLSNDELLPVARAFSQFLNLANTAEQYHSISPKGEAASNPEVIARTLRKLKNQPELSEDTIKKAVESLSLELVLTAHPTEITRRTLIHKMVEVNACLKQLDNKDIADYEHNQLMRRLRQLIAQSWHTDEIRKLRPSPVDEAKWGFAVVENSLWQGVPNYLRELNEQLEENLGYKLPVEFVPVRFTSWMGGDRDGNPNVTADITRHVLLLSRWKATDLFLKDIQVLVSELSMVEATPELLALVGEEGAAEPYRYLMKNLRSRLMATQAWLEARLKGEELPKPEGLLTQNEELWEPLYACYQSLQACGMGIIANGDLLDTLRRVKCFGVPLVRIDIRQESTRHTEALGELTRYLGIGDYESWSEADKQAFLIRELNSKRPLLPRNWQPSAETREVLDTCQVIAEAPQGSIAAYVISMAKTPSDVLAVHLLLKEAGIGFAMPVAPLFETLDDLNNANDVMTQLLNIDWYRGLIQGKQMVMIGYSDSAKDAGVMAASWAQYQAQDALIKTCEKAGIELTLFHGRGGSIGRGGAPAHAALLSQPPGSLKGGLRVTEQGEMIRFKYGLPEITVSSLSLYTGAILEANLLPPPEPKESWRRIMDELSVISCDLYRGYVRENKDFVPYFRSATPEQELGKLPLGSRPAKRRPTGGVESLRAIPWIFAWTQNRLMLPAWLGAGTALQKVVEDGKQSELEAMCRDWPFFSTRLGMLEMVFAKADLWLAEYYDQRLVDKALWPLGKELRNLQEEDIKVVLAIANDSHLMADLPWIAESIQLRNIYTDPLNVLQAELLHRSRQAEKEGQEPDPRVEQALMVTIAGIAAGMRNTG.

Residues His-138 and Lys-546 contribute to the active site.

This sequence belongs to the PEPCase type 1 family. It depends on Mg(2+) as a cofactor.

The catalysed reaction is oxaloacetate + phosphate = phosphoenolpyruvate + hydrogencarbonate. Its function is as follows. Forms oxaloacetate, a four-carbon dicarboxylic acid source for the tricarboxylic acid cycle. This is Phosphoenolpyruvate carboxylase from Escherichia coli (strain 55989 / EAEC).